The sequence spans 622 residues: Low affinity potassium transport system protein Kup (622 aa).

12 consecutive transmembrane segments (helical) span residues 9 to 29 (LPAV…TSPL), 49 to 69 (VFGF…LKYL), 101 to 121 (VLVI…VITP), 137 to 157 (PSMD…LFII), 165 to 185 (VGKL…VLGA), 212 to 232 (AVSF…EALY), 247 to 267 (WFTV…ALLL), 279 to 299 (LLAP…ATII), 337 to 357 (IYIP…IVSF), 363 to 383 (LAAA…ILFC), 397 to 417 (AWVL…ANVV), and 419 to 439 (ILSG…IMTT).

Belongs to the HAK/KUP transporter (TC 2.A.72) family.

The protein resides in the cell inner membrane. The enzyme catalyses K(+)(in) + H(+)(in) = K(+)(out) + H(+)(out). In terms of biological role, responsible for the low-affinity transport of potassium into the cell. Likely operates as a K(+):H(+) symporter. This chain is Low affinity potassium transport system protein Kup, found in Pectobacterium carotovorum subsp. carotovorum (strain PC1).